Reading from the N-terminus, the 372-residue chain is Anhydro-N-acetylmuramic acid kinase (372 aa).

Residue 13 to 20 (GTSMDGID) coordinates ATP.

The protein belongs to the anhydro-N-acetylmuramic acid kinase family.

The catalysed reaction is 1,6-anhydro-N-acetyl-beta-muramate + ATP + H2O = N-acetyl-D-muramate 6-phosphate + ADP + H(+). It functions in the pathway amino-sugar metabolism; 1,6-anhydro-N-acetylmuramate degradation. It participates in cell wall biogenesis; peptidoglycan recycling. Functionally, catalyzes the specific phosphorylation of 1,6-anhydro-N-acetylmuramic acid (anhMurNAc) with the simultaneous cleavage of the 1,6-anhydro ring, generating MurNAc-6-P. Is required for the utilization of anhMurNAc either imported from the medium or derived from its own cell wall murein, and thus plays a role in cell wall recycling. The chain is Anhydro-N-acetylmuramic acid kinase from Rhizobium johnstonii (strain DSM 114642 / LMG 32736 / 3841) (Rhizobium leguminosarum bv. viciae).